We begin with the raw amino-acid sequence, 968 residues long: RNA polymerase-associated protein RapA (968 aa).

In terms of domain architecture, Helicase ATP-binding spans 163 to 332; it reads EVGRRYAPRV…FARLRLLDPD (170 aa). Residue 176-183 coordinates ATP; the sequence is DEVGLGKT. The short motif at 278–281 is the DEAH box element; it reads DEAH. The 165-residue stretch at 491 to 655 folds into the Helicase C-terminal domain; it reads RVDWLIEFLK…EFAEDLLNVL (165 aa).

Belongs to the SNF2/RAD54 helicase family. RapA subfamily. Interacts with the RNAP. Has a higher affinity for the core RNAP than for the holoenzyme. Its ATPase activity is stimulated by binding to RNAP.

Its function is as follows. Transcription regulator that activates transcription by stimulating RNA polymerase (RNAP) recycling in case of stress conditions such as supercoiled DNA or high salt concentrations. Probably acts by releasing the RNAP, when it is trapped or immobilized on tightly supercoiled DNA. Does not activate transcription on linear DNA. Probably not involved in DNA repair. The polypeptide is RNA polymerase-associated protein RapA (Shewanella baltica (strain OS223)).